The chain runs to 160 residues: Cytochrome b6-f complex subunit 4 (160 aa).

3 helical membrane-spanning segments follow: residues 36–56 (LLYV…ALAV), 95–115 (LLGV…PFIE), and 131–151 (TVFL…ALPL).

This sequence belongs to the cytochrome b family. PetD subfamily. In terms of assembly, the 4 large subunits of the cytochrome b6-f complex are cytochrome b6, subunit IV (17 kDa polypeptide, PetD), cytochrome f and the Rieske protein, while the 4 small subunits are PetG, PetL, PetM and PetN. The complex functions as a dimer.

It localises to the cellular thylakoid membrane. Component of the cytochrome b6-f complex, which mediates electron transfer between photosystem II (PSII) and photosystem I (PSI), cyclic electron flow around PSI, and state transitions. The protein is Cytochrome b6-f complex subunit 4 of Desmonostoc sp. (strain PCC 7906) (Nostoc sp. (strain PCC 7906)).